A 249-amino-acid chain; its full sequence is ATP synthase subunit a (249 aa).

A run of 5 helical transmembrane segments spans residues 33-53 (GQVIAVSWIVFAILIIASIAA), 92-112 (LPFIGTLFLFIFVSNWLGALI), 131-151 (INTTVALALLTSLAYFYAGIS), 196-216 (LVVAVLVFLVPLVVPLPLMAL), and 217-237 (GLFTSAIQALVFATLAGAYIH).

Belongs to the ATPase A chain family. In terms of assembly, F-type ATPases have 2 components, CF(1) - the catalytic core - and CF(0) - the membrane proton channel. CF(1) has five subunits: alpha(3), beta(3), gamma(1), delta(1), epsilon(1). CF(0) has four main subunits: a, b, b' and c.

The protein resides in the cellular thylakoid membrane. Functionally, key component of the proton channel; it plays a direct role in the translocation of protons across the membrane. This is ATP synthase subunit a from Microcystis aeruginosa (strain NIES-843 / IAM M-2473).